We begin with the raw amino-acid sequence, 274 residues long: Large ribosomal subunit protein uL2cz/uL2cy (274 aa).

A disordered region spans residues 224-253 (NPIDHPHGGGEGRAPIGRKKPTTPWGYPAL).

Belongs to the universal ribosomal protein uL2 family. In terms of assembly, part of the 50S ribosomal subunit.

Its subcellular location is the plastid. This is Large ribosomal subunit protein uL2cz/uL2cy (rpl2-A) from Epifagus virginiana (Beechdrops).